Consider the following 254-residue polypeptide: MVQLRPRLSRIPAPAEAMVDEDQAASEEEEAEHGLLLAQPSSGAAAEPLDEEEDADDEAPEELTFASAQAEAREEELRVRASARRDKTLLKEKRKRREELFIEQKKRKLLPDAVLEQLTTASEADIKKSPENVKVNLKKKSEQHAKGRNSKKVKVQKVQSVGQIESYMAVRLKDEDLRDSRQEAAKHFIHSCLYGSDSKRTTVNKFLSLNNKRSPVKKAAAQFLTSTWGAQKQQNAKRFKKRWMAKKMKKKTYK.

A disordered region spans residues 1-90; sequence MVQLRPRLSR…ASARRDKTLL (90 aa). Acidic residues-rich tracts occupy residues 18 to 31 and 48 to 61; these read MVDEDQAASEEEEA and PLDEEEDADDEAPE. Residues 71–90 show a composition bias toward basic and acidic residues; the sequence is EAREEELRVRASARRDKTLL. Residue K127 forms a Glycyl lysine isopeptide (Lys-Gly) (interchain with G-Cter in SUMO2) linkage. A Phosphoserine modification is found at S129. A Glycyl lysine isopeptide (Lys-Gly) (interchain with G-Cter in SUMO2) cross-link involves residue K157. A disordered region spans residues 235 to 254; it reads NAKRFKKRWMAKKMKKKTYK.

The protein belongs to the UTP16 family. In terms of assembly, part of the small subunit (SSU) processome, composed of more than 70 proteins and the RNA chaperone small nucleolar RNA (snoRNA) U3.

The protein localises to the nucleus. It is found in the nucleolus. Functionally, functions as part of the small subunit (SSU) processome, first precursor of the small eukaryotic ribosomal subunit that coordinates the first two steps of ribosome biogenesis in transcription of the primary transcript pre-RNA and pre-18S processing. During the assembly of the SSU processome in the nucleolus, many ribosome biogenesis factors, an RNA chaperone and ribosomal proteins associate with the nascent pre-rRNA and work in concert to generate RNA folding, modifications, rearrangements and cleavage as well as targeted degradation of pre-ribosomal RNA by the RNA exosome. This subunit is required for processing of the 5'-external transcribed spacer sequence (5'ETS) of the primary transcript pre-rRNA to yield the 18S rRNA. Also plays a role in maintaining early pre-rRNA levels, either by assisting in its transcription or stability. This chain is U3 small nucleolar RNA-associated protein NOL7 (Nol7), found in Mus musculus (Mouse).